The following is a 277-amino-acid chain: Acetyl-coenzyme A carboxylase carboxyl transferase subunit beta (277 aa).

Positions 22-277 (LWTKCPGCNR…TLKQLLYFLT (256 aa)) constitute a CoA carboxyltransferase N-terminal domain. 4 residues coordinate Zn(2+): C26, C29, C45, and C48. Residues 26 to 48 (CPGCNRFLYTKELELNQSVCHYC) form a C4-type zinc finger.

This sequence belongs to the AccD/PCCB family. Acetyl-CoA carboxylase is a heterohexamer composed of biotin carboxyl carrier protein (AccB), biotin carboxylase (AccC) and two subunits each of ACCase subunit alpha (AccA) and ACCase subunit beta (AccD). Zn(2+) is required as a cofactor.

The protein localises to the cytoplasm. The catalysed reaction is N(6)-carboxybiotinyl-L-lysyl-[protein] + acetyl-CoA = N(6)-biotinyl-L-lysyl-[protein] + malonyl-CoA. Its pathway is lipid metabolism; malonyl-CoA biosynthesis; malonyl-CoA from acetyl-CoA: step 1/1. In terms of biological role, component of the acetyl coenzyme A carboxylase (ACC) complex. Biotin carboxylase (BC) catalyzes the carboxylation of biotin on its carrier protein (BCCP) and then the CO(2) group is transferred by the transcarboxylase to acetyl-CoA to form malonyl-CoA. This is Acetyl-coenzyme A carboxylase carboxyl transferase subunit beta from Methylacidiphilum infernorum (isolate V4) (Methylokorus infernorum (strain V4)).